A 123-amino-acid chain; its full sequence is Large ribosomal subunit protein bL19 (123 aa).

Belongs to the bacterial ribosomal protein bL19 family.

Its function is as follows. This protein is located at the 30S-50S ribosomal subunit interface and may play a role in the structure and function of the aminoacyl-tRNA binding site. The sequence is that of Large ribosomal subunit protein bL19 from Laribacter hongkongensis (strain HLHK9).